Consider the following 239-residue polypeptide: Putative CRISPR-associated endoribonuclease-like protein Cas6nc (239 aa).

This sequence belongs to the CRISPR-associated protein Cas6/Cse3/CasE family. In terms of assembly, monomer; homodimer when crystallized in the presence of crRNA. Varying the crRNA sequence varies degree of oligomerization and structure.

Its function is as follows. CRISPR (clustered regularly interspaced short palindromic repeat), is an adaptive immune system that provides protection against mobile genetic elements (viruses, transposable elements and conjugative plasmids). CRISPR clusters contain sequences complementary to antecedent mobile elements and target invading nucleic acids. CRISPR clusters are transcribed and processed into CRISPR RNA (crRNA), also called psiRNA (prokaryotic silencing) in this organism (Potential). The sequence is that of Putative CRISPR-associated endoribonuclease-like protein Cas6nc (cas6nc) from Pyrococcus horikoshii (strain ATCC 700860 / DSM 12428 / JCM 9974 / NBRC 100139 / OT-3).